Consider the following 685-residue polypeptide: tRNA 5-methylaminomethyl-2-thiouridine biosynthesis bifunctional protein MnmC (685 aa).

Positions 1–272 (MTAEPNKPCQ…MAAILSSATQ (272 aa)) are tRNA (mnm(5)s(2)U34)-methyltransferase. The segment at 278-685 (IGGGLASAHL…LRKLLKGKAL (408 aa)) is FAD-dependent cmnm(5)s(2)U34 oxidoreductase.

In the N-terminal section; belongs to the methyltransferase superfamily. tRNA (mnm(5)s(2)U34)-methyltransferase family. It in the C-terminal section; belongs to the DAO family. The cofactor is FAD.

The protein resides in the cytoplasm. The enzyme catalyses 5-aminomethyl-2-thiouridine(34) in tRNA + S-adenosyl-L-methionine = 5-methylaminomethyl-2-thiouridine(34) in tRNA + S-adenosyl-L-homocysteine + H(+). Its function is as follows. Catalyzes the last two steps in the biosynthesis of 5-methylaminomethyl-2-thiouridine (mnm(5)s(2)U) at the wobble position (U34) in tRNA. Catalyzes the FAD-dependent demodification of cmnm(5)s(2)U34 to nm(5)s(2)U34, followed by the transfer of a methyl group from S-adenosyl-L-methionine to nm(5)s(2)U34, to form mnm(5)s(2)U34. The polypeptide is tRNA 5-methylaminomethyl-2-thiouridine biosynthesis bifunctional protein MnmC (Shewanella baltica (strain OS185)).